The chain runs to 613 residues: Cleavage and polyadenylation specificity factor subunit 3-II (613 aa).

An HXHXDH motif motif is present at residues 67 to 72 (HFHMDH).

It belongs to the metallo-beta-lactamase superfamily. RNA-metabolizing metallo-beta-lactamase-like family. INTS11 subfamily. Component of the CPSF complex, at least composed of CPSF160, CPSF100, CPSF73-I, CPSF73-II, CPSF30, FY and FIPS5. Interacts with CPSF30, CPSF100, CPSF160 and FY. In terms of tissue distribution, highly expressed in senescence leaves, petals, stamens, pollen and late stages of siliques with seeds. Also detected in roots, stems, leaves and seedlings.

It localises to the nucleus. Its function is as follows. Component of the cleavage and polyadenylation specificity factor (CPSF) complex that play a key role in pre-mRNA 3'-end formation, recognizing the AAUAAA signal sequence and interacting with poly(A) polymerase and other factors to bring about cleavage and poly(A) addition. May function as mRNA 3'-end-processing endonuclease and also be involved in the histone 3'-end pre-mRNA processing. This Arabidopsis thaliana (Mouse-ear cress) protein is Cleavage and polyadenylation specificity factor subunit 3-II (CPSF73-II).